A 198-amino-acid chain; its full sequence is Bcl-2-like protein 11 (198 aa).

Residues 1 to 72 (MAKQPSDVSS…PLAPPASPGP (72 aa)) are disordered. The residue at position 69 (serine 69) is a Phosphoserine; by MAPK. Phosphoserine occurs at positions 77, 87, and 94. Residues 148–162 (IAQELRRIGDEFNAY) carry the BH3 motif.

It belongs to the Bcl-2 family. As to quaternary structure, forms heterodimers with a number of antiapoptotic Bcl-2 proteins, including MCL1, BCL2, BCL2L1 isoform Bcl-X(L), BCL2A1/BFL-1, BHRF1, and BCL2L2/BCLW. Does not heterodimerize with proapoptotic proteins such as BAD, BOK or BAK. Identified in a complex containing BCL2L11, DYNLL1 and BCL2L1 isoform Bcl-X(L); BH3 integrity is required for BCL2L1-binding. Interacts with YWHAZ. When phosphorylated, interacts with TRIM2; this interaction is associated with ubiquitination and degradation. Interacts with MCL1; may sequester BCL2L11 to prevent its pro-apoptotic activity. Interacts with GIMAP5. Interacts with BCL2L10/BCL-B. Interacts (when phosphorylated) with USP27X; the interaction leads to BCL2L11 deubiquitination and stabilization. Interacts with humanin; the interaction prevents BIM-induced apoptosis. In terms of assembly, does not interact with humanin. As to quaternary structure, interacts with BAX; the interaction may lead to BAX activation through conformational change. Does not interact with humanin. Interacts with BAX; the interaction may lead to BAX activation through conformational change. In terms of processing, phosphorylation at Ser-69 by MAPK1/MAPK3 leads to interaction with TRIM2 and polyubiquitination, followed by proteasomal degradation. Deubiquitination catalyzed by USP27X stabilizes the protein. Post-translationally, ubiquitination by TRIM2 following phosphorylation by MAPK1/MAPK3 leads to proteasomal degradation. Conversely, deubiquitination catalyzed by USP27X stabilizes the protein. As to expression, isoform BimEL, isoform BimL and isoform BimS are the predominant isoforms and are widely expressed with tissue-specific variation. Isoform Bim-gamma is most abundantly expressed in small intestine and colon, and in lower levels in spleen, prostate, testis, heart, liver and kidney.

Its subcellular location is the endomembrane system. The protein localises to the mitochondrion. Its function is as follows. Induces apoptosis and anoikis. Isoform BimL is more potent than isoform BimEL. Isoform Bim-alpha1, isoform Bim-alpha2 and isoform Bim-alpha3 induce apoptosis, although less potent than isoform BimEL, isoform BimL and isoform BimS. Isoform Bim-gamma induces apoptosis. Isoform Bim-alpha3 induces apoptosis possibly through a caspase-mediated pathway. Isoform BimAC and isoform BimABC lack the ability to induce apoptosis. The sequence is that of Bcl-2-like protein 11 (BCL2L11) from Homo sapiens (Human).